A 342-amino-acid polypeptide reads, in one-letter code: Metalloendoproteinase 4-MMP (342 aa).

Positions 1–34 (MHHHHHPCNRKPFTTIFSFFLLYLNLHNQQIIEA) are cleaved as a signal peptide. A propeptide spans 35-124 (RNPSQFTTNP…KTAPFHTGKK (90 aa)) (activation peptide). The Cysteine switch motif lies at 104–111 (PRCGFPDD). Zn(2+) contacts are provided by Cys-106 and His-252. Glu-253 is an active-site residue. Positions 256 and 262 each coordinate Zn(2+). Asn-300 is a glycosylation site (N-linked (GlcNAc...) asparagine). Asp-317 carries the GPI-anchor amidated aspartate lipid modification. Residues 318–342 (GSRIRSQGMIYSTLSTVIALCFLNW) constitute a propeptide, removed in mature form.

The protein belongs to the peptidase M10A family. Matrix metalloproteinases (MMPs) subfamily. Requires Zn(2+) as cofactor. In terms of tissue distribution, mostly expressed in flowers and stems, and, to a lower extent, in leaves and roots.

It is found in the cell membrane. With respect to regulation, repressed by acetohydroxamic acid (AHA). Functionally, matrix metalloproteinases (MMPs) or matrixins may play a role in the degradation and remodeling of the extracellular matrix (ECM) during development or in response to stresses. Active on myelin basic protein (MBP) and, to some extent, on McaPLGLDpaAR-NH(2) (QF24) and beta-casein. The polypeptide is Metalloendoproteinase 4-MMP (Arabidopsis thaliana (Mouse-ear cress)).